A 128-amino-acid polypeptide reads, in one-letter code: Phycoerythrin alpha-3 chain, chloroplastic (128 aa).

The transit peptide at methionine 1 to alanine 52 directs the protein to the chloroplast. Lysine 56 carries the 5-hydroxylysine modification. The interval glycine 70–glutamate 89 is disordered. 15,16-dihydrobiliverdin contacts are provided by residues cysteine 71, arginine 73, glutamate 77–serine 78, and lysine 93.

This sequence belongs to the phycoerythrin family. In terms of assembly, heterotetramer of 2 different alpha chains and 2 identical beta chains. The subunit composition could comprise of any combination of 2 out of 4 different alpha units with an invariant beta unit. Contains one covalently linked 15,16-dihydrobiliverdin chromophore.

The protein localises to the plastid. It localises to the chloroplast thylakoid membrane. Functionally, light-harvesting photosynthetic tetrapyrrole chromophore-protein from the phycobiliprotein complex. The chain is Phycoerythrin alpha-3 chain, chloroplastic (cpeA3) from Rhodomonas sp. (strain CS 24) (Chroomonas sp. (strain CS24)).